A 268-amino-acid polypeptide reads, in one-letter code: Tryptophan synthase alpha chain (268 aa).

Catalysis depends on proton acceptor residues glutamate 49 and aspartate 60.

This sequence belongs to the TrpA family. In terms of assembly, tetramer of two alpha and two beta chains.

The catalysed reaction is (1S,2R)-1-C-(indol-3-yl)glycerol 3-phosphate + L-serine = D-glyceraldehyde 3-phosphate + L-tryptophan + H2O. It participates in amino-acid biosynthesis; L-tryptophan biosynthesis; L-tryptophan from chorismate: step 5/5. Functionally, the alpha subunit is responsible for the aldol cleavage of indoleglycerol phosphate to indole and glyceraldehyde 3-phosphate. The polypeptide is Tryptophan synthase alpha chain (Dechloromonas aromatica (strain RCB)).